The following is a 286-amino-acid chain: Ribosomal RNA small subunit methyltransferase A (286 aa).

S-adenosyl-L-methionine-binding residues include Asn28, Leu30, Gly55, Glu77, Asp103, and Asn123.

It belongs to the class I-like SAM-binding methyltransferase superfamily. rRNA adenine N(6)-methyltransferase family. RsmA subfamily.

Its subcellular location is the cytoplasm. The enzyme catalyses adenosine(1518)/adenosine(1519) in 16S rRNA + 4 S-adenosyl-L-methionine = N(6)-dimethyladenosine(1518)/N(6)-dimethyladenosine(1519) in 16S rRNA + 4 S-adenosyl-L-homocysteine + 4 H(+). Specifically dimethylates two adjacent adenosines (A1518 and A1519) in the loop of a conserved hairpin near the 3'-end of 16S rRNA in the 30S particle. May play a critical role in biogenesis of 30S subunits. The chain is Ribosomal RNA small subunit methyltransferase A from Bradyrhizobium sp. (strain BTAi1 / ATCC BAA-1182).